Consider the following 458-residue polypeptide: Chromosomal replication initiator protein DnaA (458 aa).

The interval 1-79 (MSLAIWQECL…ENPNHSVKIR (79 aa)) is domain I, interacts with DnaA modulators. The interval 79–120 (RLMVGNVSSVEKKPAKQIPTQAPLTNQPWEGESKAHRVPHKS) is domain II. The disordered stretch occupies residues 92–114 (PAKQIPTQAPLTNQPWEGESKAH). The span at 96 to 106 (IPTQAPLTNQP) shows a compositional bias: polar residues. The interval 121–338 (NLIKKYTFDN…GAIANISAKA (218 aa)) is domain III, AAA+ region. ATP-binding residues include G165, G167, K168, and T169. Residues 339-458 (QFTGQGITIS…YKILIRTLSM (120 aa)) are domain IV, binds dsDNA.

The protein belongs to the DnaA family. In terms of assembly, oligomerizes as a right-handed, spiral filament on DNA at oriC.

It localises to the cytoplasm. Plays an essential role in the initiation and regulation of chromosomal replication. ATP-DnaA binds to the origin of replication (oriC) to initiate formation of the DNA replication initiation complex once per cell cycle. Binds the DnaA box (a 9 base pair repeat at the origin) and separates the double-stranded (ds)DNA. Forms a right-handed helical filament on oriC DNA; dsDNA binds to the exterior of the filament while single-stranded (ss)DNA is stabiized in the filament's interior. The ATP-DnaA-oriC complex binds and stabilizes one strand of the AT-rich DNA unwinding element (DUE), permitting loading of DNA polymerase. After initiation quickly degrades to an ADP-DnaA complex that is not apt for DNA replication. Binds acidic phospholipids. The protein is Chromosomal replication initiator protein DnaA of Psychromonas ingrahamii (strain DSM 17664 / CCUG 51855 / 37).